The primary structure comprises 308 residues: Transaldolase (308 aa).

Residue Lys125 is the Schiff-base intermediate with substrate of the active site.

The protein belongs to the transaldolase family. Type 1 subfamily. In terms of assembly, homodimer.

It is found in the cytoplasm. The enzyme catalyses D-sedoheptulose 7-phosphate + D-glyceraldehyde 3-phosphate = D-erythrose 4-phosphate + beta-D-fructose 6-phosphate. It participates in carbohydrate degradation; pentose phosphate pathway; D-glyceraldehyde 3-phosphate and beta-D-fructose 6-phosphate from D-ribose 5-phosphate and D-xylulose 5-phosphate (non-oxidative stage): step 2/3. Transaldolase is important for the balance of metabolites in the pentose-phosphate pathway. This is Transaldolase from Pseudomonas putida (strain ATCC 47054 / DSM 6125 / CFBP 8728 / NCIMB 11950 / KT2440).